The chain runs to 457 residues: Bifunctional protein GlmU (457 aa).

Residues 1-230 are pyrophosphorylase; it reads MSKRYAVVLA…FEESLGVNDR (230 aa). UDP-N-acetyl-alpha-D-glucosamine contacts are provided by residues 9–12, lysine 23, glutamine 73, and 78–79; these read LAAG and GT. Residue aspartate 103 coordinates Mg(2+). Residues glycine 140, glutamate 155, asparagine 170, and asparagine 228 each contribute to the UDP-N-acetyl-alpha-D-glucosamine site. A Mg(2+)-binding site is contributed by asparagine 228. The interval 231-251 is linker; that stretch reads IALAEASKLMQRRINENHMRN. Positions 252 to 457 are N-acetyltransferase; sequence GVTLVNPEST…GYAKHLNHGK (206 aa). UDP-N-acetyl-alpha-D-glucosamine-binding residues include arginine 333 and lysine 351. Histidine 363 functions as the Proton acceptor in the catalytic mechanism. Residues tyrosine 366 and asparagine 377 each contribute to the UDP-N-acetyl-alpha-D-glucosamine site. Residues 386–387, alanine 423, and arginine 440 each bind acetyl-CoA; that span reads NY.

This sequence in the N-terminal section; belongs to the N-acetylglucosamine-1-phosphate uridyltransferase family. It in the C-terminal section; belongs to the transferase hexapeptide repeat family. As to quaternary structure, homotrimer. It depends on Mg(2+) as a cofactor.

It is found in the cytoplasm. The enzyme catalyses alpha-D-glucosamine 1-phosphate + acetyl-CoA = N-acetyl-alpha-D-glucosamine 1-phosphate + CoA + H(+). It catalyses the reaction N-acetyl-alpha-D-glucosamine 1-phosphate + UTP + H(+) = UDP-N-acetyl-alpha-D-glucosamine + diphosphate. It functions in the pathway nucleotide-sugar biosynthesis; UDP-N-acetyl-alpha-D-glucosamine biosynthesis; N-acetyl-alpha-D-glucosamine 1-phosphate from alpha-D-glucosamine 6-phosphate (route II): step 2/2. The protein operates within nucleotide-sugar biosynthesis; UDP-N-acetyl-alpha-D-glucosamine biosynthesis; UDP-N-acetyl-alpha-D-glucosamine from N-acetyl-alpha-D-glucosamine 1-phosphate: step 1/1. Its pathway is bacterial outer membrane biogenesis; LPS lipid A biosynthesis. Its function is as follows. Catalyzes the last two sequential reactions in the de novo biosynthetic pathway for UDP-N-acetylglucosamine (UDP-GlcNAc). The C-terminal domain catalyzes the transfer of acetyl group from acetyl coenzyme A to glucosamine-1-phosphate (GlcN-1-P) to produce N-acetylglucosamine-1-phosphate (GlcNAc-1-P), which is converted into UDP-GlcNAc by the transfer of uridine 5-monophosphate (from uridine 5-triphosphate), a reaction catalyzed by the N-terminal domain. In Listeria monocytogenes serotype 4a (strain HCC23), this protein is Bifunctional protein GlmU.